We begin with the raw amino-acid sequence, 201 residues long: Recombination protein RecR (201 aa).

The C4-type zinc-finger motif lies at 60 to 75 (CSVCGNVDTSDPCTIC). The region spanning 83-178 (ATLIVVEDVS…RVTKLAHGVP (96 aa)) is the Toprim domain.

It belongs to the RecR family.

Functionally, may play a role in DNA repair. It seems to be involved in an RecBC-independent recombinational process of DNA repair. It may act with RecF and RecO. This is Recombination protein RecR from Chelativorans sp. (strain BNC1).